A 93-amino-acid chain; its full sequence is Small ribosomal subunit protein uS19 (93 aa).

Belongs to the universal ribosomal protein uS19 family.

Its function is as follows. Protein S19 forms a complex with S13 that binds strongly to the 16S ribosomal RNA. The sequence is that of Small ribosomal subunit protein uS19 from Alkaliphilus metalliredigens (strain QYMF).